Here is a 310-residue protein sequence, read N- to C-terminus: S-methyl-5'-thioadenosine phosphorylase (310 aa).

Phosphate contacts are provided by residues Thr-20, 62-63 (RH), and 95-96 (SA). Position 197 (Met-197) interacts with substrate. Phosphate is bound at residue Ser-198. 221–223 (DYD) contacts substrate.

This sequence belongs to the PNP/MTAP phosphorylase family. MTAP subfamily. As to quaternary structure, homotrimer.

The protein localises to the cytoplasm. The protein resides in the nucleus. The catalysed reaction is S-methyl-5'-thioadenosine + phosphate = 5-(methylsulfanyl)-alpha-D-ribose 1-phosphate + adenine. It participates in amino-acid biosynthesis; L-methionine biosynthesis via salvage pathway; S-methyl-5-thio-alpha-D-ribose 1-phosphate from S-methyl-5'-thioadenosine (phosphorylase route): step 1/1. Catalyzes the reversible phosphorylation of S-methyl-5'-thioadenosine (MTA) to adenine and 5-methylthioribose-1-phosphate. Involved in the breakdown of MTA, a major by-product of polyamine biosynthesis. Responsible for the first step in the methionine salvage pathway after MTA has been generated from S-adenosylmethionine. Has broad substrate specificity with 6-aminopurine nucleosides as preferred substrates. The polypeptide is S-methyl-5'-thioadenosine phosphorylase (Neurospora crassa (strain ATCC 24698 / 74-OR23-1A / CBS 708.71 / DSM 1257 / FGSC 987)).